Consider the following 304-residue polypeptide: 4-diphosphocytidyl-2-C-methyl-D-erythritol kinase (304 aa).

Lys23 is a catalytic residue. 111-121 (PIGGGLGGGSS) is an ATP binding site. Asp153 is a catalytic residue.

The protein belongs to the GHMP kinase family. IspE subfamily. As to quaternary structure, homodimer.

It carries out the reaction 4-CDP-2-C-methyl-D-erythritol + ATP = 4-CDP-2-C-methyl-D-erythritol 2-phosphate + ADP + H(+). It functions in the pathway isoprenoid biosynthesis; isopentenyl diphosphate biosynthesis via DXP pathway; isopentenyl diphosphate from 1-deoxy-D-xylulose 5-phosphate: step 3/6. Functionally, catalyzes the phosphorylation of the position 2 hydroxy group of 4-diphosphocytidyl-2C-methyl-D-erythritol. The chain is 4-diphosphocytidyl-2-C-methyl-D-erythritol kinase from Wigglesworthia glossinidia brevipalpis.